The sequence spans 115 residues: MARVKRGNIARKRRNKILNLAKGFRGGNKNLFRTANQRVMKALCNAYRDRRRRKRDFRRLWISRINASARINGTNYSRLINGMKNSEIIINRKMLAQLALSDPQCFEKIVSTVNN.

Belongs to the bacterial ribosomal protein bL20 family.

Binds directly to 23S ribosomal RNA and is necessary for the in vitro assembly process of the 50S ribosomal subunit. It is not involved in the protein synthesizing functions of that subunit. The protein is Large ribosomal subunit protein bL20 of Prochlorococcus marinus subsp. pastoris (strain CCMP1986 / NIES-2087 / MED4).